We begin with the raw amino-acid sequence, 245 residues long: MIVIPAIDLKEGNCVRLEQGEMNRDTVFSDNPAEQALKWQEAGAELLHLVDLDGAFAGIPKNKAAIEAIIKAITIPAQLGGGIRDIATIEAYLSLGLSRVIIGTAAQRNPELVIEACQKFPGRIVVGIDAKNGMVAVQGWAELTDISAVDLAKKFEDCGVAAIIYTDISRDGMMGGPNLEATRALAEAISIPVIASGGVSSLKDIENLMAIEASGVTGAITGKAIYTGAINLREAIDLTKRGCQC.

Residue Asp8 is the Proton acceptor of the active site. The Proton donor role is filled by Asp129.

This sequence belongs to the HisA/HisF family.

Its subcellular location is the cytoplasm. The enzyme catalyses 1-(5-phospho-beta-D-ribosyl)-5-[(5-phospho-beta-D-ribosylamino)methylideneamino]imidazole-4-carboxamide = 5-[(5-phospho-1-deoxy-D-ribulos-1-ylimino)methylamino]-1-(5-phospho-beta-D-ribosyl)imidazole-4-carboxamide. It functions in the pathway amino-acid biosynthesis; L-histidine biosynthesis; L-histidine from 5-phospho-alpha-D-ribose 1-diphosphate: step 4/9. This Trichlorobacter lovleyi (strain ATCC BAA-1151 / DSM 17278 / SZ) (Geobacter lovleyi) protein is 1-(5-phosphoribosyl)-5-[(5-phosphoribosylamino)methylideneamino] imidazole-4-carboxamide isomerase.